An 89-amino-acid chain; its full sequence is Small ribosomal subunit protein uS15 (89 aa).

The span at 1 to 21 shows a compositional bias: basic and acidic residues; it reads MSITTEEKARVMKEYGTKDGD. A disordered region spans residues 1-24; that stretch reads MSITTEEKARVMKEYGTKDGDTGS.

Belongs to the universal ribosomal protein uS15 family. As to quaternary structure, part of the 30S ribosomal subunit. Forms a bridge to the 50S subunit in the 70S ribosome, contacting the 23S rRNA.

One of the primary rRNA binding proteins, it binds directly to 16S rRNA where it helps nucleate assembly of the platform of the 30S subunit by binding and bridging several RNA helices of the 16S rRNA. Functionally, forms an intersubunit bridge (bridge B4) with the 23S rRNA of the 50S subunit in the ribosome. This is Small ribosomal subunit protein uS15 from Ruegeria pomeroyi (strain ATCC 700808 / DSM 15171 / DSS-3) (Silicibacter pomeroyi).